Reading from the N-terminus, the 385-residue chain is Protein pelota homolog (385 aa).

K162 is covalently cross-linked (Glycyl lysine isopeptide (Lys-Gly) (interchain with G-Cter in SUMO2)). S374, S380, S381, and S382 each carry phosphoserine.

It belongs to the eukaryotic release factor 1 family. Pelota subfamily. Component of the Pelota-HBS1L complex, also named Dom34-Hbs1 complex, composed of PELO and HBS1L. Interacts with PINK1. Interacts with ABCE1. Interacts with CNOT4. A divalent metal cation serves as cofactor. As to expression, ubiquitously expressed.

The protein resides in the cytoplasm. Its function is as follows. Component of the Pelota-HBS1L complex, a complex that recognizes stalled ribosomes and triggers the No-Go Decay (NGD) pathway. In the Pelota-HBS1L complex, PELO recognizes ribosomes stalled at the 3' end of an mRNA and engages stalled ribosomes by destabilizing mRNA in the mRNA channel. Following mRNA extraction from stalled ribosomes by the SKI complex, the Pelota-HBS1L complex promotes recruitment of ABCE1, which drives the disassembly of stalled ribosomes, followed by degradation of damaged mRNAs as part of the NGD pathway. As part of the PINK1-regulated signaling, upon mitochondrial damage is recruited to the ribosome/mRNA-ribonucleoprotein complex associated to mitochondrial outer membrane thereby enabling the recruitment of autophagy receptors and induction of mitophagy. This is Protein pelota homolog from Homo sapiens (Human).